The following is a 196-amino-acid chain: Baseplate wedge protein gp53 (196 aa).

As to quaternary structure, part of the baseplate macromolecular complex which consists of gp5, gp5.4, gp27 (central spike complex); gp6, gp25, gp53 (inner baseplate); gp7, gp8 (intermediate baseplate); gp9, gp10, gp11, gp12 (peripheral); gp48 and gp54 (proximal region of the tail tube). Interacts with gp25 and with the (gp6)2-gp7 heterotrimeric molecule.

Its subcellular location is the virion. Its function is as follows. Baseplate protein that is located next to the tail tube (inner baseplate). Involved in the tail assembly. Involved in the tail assembly. This chain is Baseplate wedge protein gp53 (53), found in Enterobacteria phage T4 (Bacteriophage T4).